A 336-amino-acid polypeptide reads, in one-letter code: 4-hydroxy-3-methylbut-2-enyl diphosphate reductase (336 aa).

The interval 1–23 (MFGQRLDTLGAMSSSVSSPSPET) is disordered. Cys36 provides a ligand contact to [4Fe-4S] cluster. The (2E)-4-hydroxy-3-methylbut-2-enyl diphosphate site is built by His65 and His98. Residues His65 and His98 each coordinate dimethylallyl diphosphate. Isopentenyl diphosphate is bound by residues His65 and His98. Cys120 serves as a coordination point for [4Fe-4S] cluster. Residue His148 coordinates (2E)-4-hydroxy-3-methylbut-2-enyl diphosphate. Residue His148 coordinates dimethylallyl diphosphate. His148 lines the isopentenyl diphosphate pocket. Catalysis depends on Glu150, which acts as the Proton donor. Position 190 (Thr190) interacts with (2E)-4-hydroxy-3-methylbut-2-enyl diphosphate. Residue Cys220 participates in [4Fe-4S] cluster binding. The (2E)-4-hydroxy-3-methylbut-2-enyl diphosphate site is built by Ser248, Ser249, Asn250, and Ser293. The dimethylallyl diphosphate site is built by Ser248, Ser249, Asn250, and Ser293. 4 residues coordinate isopentenyl diphosphate: Ser248, Ser249, Asn250, and Ser293.

Belongs to the IspH family. [4Fe-4S] cluster serves as cofactor.

The catalysed reaction is isopentenyl diphosphate + 2 oxidized [2Fe-2S]-[ferredoxin] + H2O = (2E)-4-hydroxy-3-methylbut-2-enyl diphosphate + 2 reduced [2Fe-2S]-[ferredoxin] + 2 H(+). It carries out the reaction dimethylallyl diphosphate + 2 oxidized [2Fe-2S]-[ferredoxin] + H2O = (2E)-4-hydroxy-3-methylbut-2-enyl diphosphate + 2 reduced [2Fe-2S]-[ferredoxin] + 2 H(+). It participates in isoprenoid biosynthesis; dimethylallyl diphosphate biosynthesis; dimethylallyl diphosphate from (2E)-4-hydroxy-3-methylbutenyl diphosphate: step 1/1. The protein operates within isoprenoid biosynthesis; isopentenyl diphosphate biosynthesis via DXP pathway; isopentenyl diphosphate from 1-deoxy-D-xylulose 5-phosphate: step 6/6. In terms of biological role, catalyzes the conversion of 1-hydroxy-2-methyl-2-(E)-butenyl 4-diphosphate (HMBPP) into a mixture of isopentenyl diphosphate (IPP) and dimethylallyl diphosphate (DMAPP). Acts in the terminal step of the DOXP/MEP pathway for isoprenoid precursor biosynthesis. This chain is 4-hydroxy-3-methylbut-2-enyl diphosphate reductase, found in Corynebacterium efficiens (strain DSM 44549 / YS-314 / AJ 12310 / JCM 11189 / NBRC 100395).